A 425-amino-acid chain; its full sequence is UPF0229 protein ETA_15540 (425 aa).

Residues 60–111 (NEPSFHQGRGGERYRVHPGNDHFVQNDRVDRPQGGGAGGSGQGNAGKDGEGQ) form a disordered region. The span at 68 to 90 (RGGERYRVHPGNDHFVQNDRVDR) shows a compositional bias: basic and acidic residues. A compositionally biased stretch (gly residues) spans 92 to 105 (QGGGAGGSGQGNAG).

Belongs to the UPF0229 family.

The polypeptide is UPF0229 protein ETA_15540 (Erwinia tasmaniensis (strain DSM 17950 / CFBP 7177 / CIP 109463 / NCPPB 4357 / Et1/99)).